Reading from the N-terminus, the 338-residue chain is tRNA N6-adenosine threonylcarbamoyltransferase (338 aa).

Positions 109 and 113 each coordinate Fe cation. Substrate contacts are provided by residues 132-136 (AISGA), Asp-165, Gly-178, and Asn-277. Asp-302 is a binding site for Fe cation.

Belongs to the KAE1 / TsaD family. Requires Fe(2+) as cofactor.

Its subcellular location is the cytoplasm. It catalyses the reaction L-threonylcarbamoyladenylate + adenosine(37) in tRNA = N(6)-L-threonylcarbamoyladenosine(37) in tRNA + AMP + H(+). Required for the formation of a threonylcarbamoyl group on adenosine at position 37 (t(6)A37) in tRNAs that read codons beginning with adenine. Is involved in the transfer of the threonylcarbamoyl moiety of threonylcarbamoyl-AMP (TC-AMP) to the N6 group of A37, together with TsaE and TsaB. TsaD likely plays a direct catalytic role in this reaction. The sequence is that of tRNA N6-adenosine threonylcarbamoyltransferase from Chlamydia trachomatis serovar L2b (strain UCH-1/proctitis).